A 229-amino-acid chain; its full sequence is Sperm-associated microtubule inner protein 5 (229 aa).

Residues 181–201 are disordered; it reads PEFSGPGQTPPSEDPQAPRPC.

Microtubule inner protein component of sperm flagellar doublet microtubules. As to expression, expressed in testis (at protein level).

It localises to the cytoplasm. The protein resides in the cytoskeleton. The protein localises to the flagellum axoneme. Its subcellular location is the nucleus. In terms of biological role, microtubule inner protein (MIP) part of the dynein-decorated doublet microtubules (DMTs) in flagellum axoneme. May serve to reinforce and thus stabilize the microtubule structure in the sperm flagella. This chain is Sperm-associated microtubule inner protein 5 (Spmip5), found in Mus musculus (Mouse).